Here is a 146-residue protein sequence, read N- to C-terminus: Ecotin-like protein 1 (146 aa).

It belongs to the protease inhibitor I11 (ecotin) family.

The protein is Ecotin-like protein 1 (ISP1) of Leishmania major.